Consider the following 317-residue polypeptide: Homoserine O-succinyltransferase (317 aa).

Cys-142 serves as the catalytic Acyl-thioester intermediate. 2 residues coordinate substrate: Lys-163 and Ser-192. The Proton acceptor role is filled by His-235. Glu-237 is an active-site residue. Arg-249 contributes to the substrate binding site.

This sequence belongs to the MetA family.

The protein localises to the cytoplasm. The catalysed reaction is L-homoserine + succinyl-CoA = O-succinyl-L-homoserine + CoA. It functions in the pathway amino-acid biosynthesis; L-methionine biosynthesis via de novo pathway; O-succinyl-L-homoserine from L-homoserine: step 1/1. Transfers a succinyl group from succinyl-CoA to L-homoserine, forming succinyl-L-homoserine. The polypeptide is Homoserine O-succinyltransferase (Aeromonas hydrophila subsp. hydrophila (strain ATCC 7966 / DSM 30187 / BCRC 13018 / CCUG 14551 / JCM 1027 / KCTC 2358 / NCIMB 9240 / NCTC 8049)).